The following is a 506-amino-acid chain: Protein P7 (506 aa).

2 RNA-binding regions span residues 128 to 249 (ISYL…GKRE) and 325 to 355 (DGSY…FKIS).

The protein belongs to the phytoreovirus protein P7 family.

Its subcellular location is the virion. The protein localises to the host cytoplasm. Functionally, probable component of the transcriptional machinery present in the inner capsid. Displays dsRNA binding activity and may play an important role in the sorting of viral RNA and virion assembly. Together with the RNA-directed RNA polymerase P1 and capping enzyme P5, forms an transcriptional complex positioned near the channels situated at each of the five-fold vertices of the core. This chain is Protein P7, found in Alopecurus aequalis (Barnyard grass).